Consider the following 274-residue polypeptide: 3-methyl-2-oxobutanoate hydroxymethyltransferase (274 aa).

Mg(2+) contacts are provided by D44 and D83. Residues 44-45, D83, and K113 contribute to the 3-methyl-2-oxobutanoate site; that span reads DS. E115 is a binding site for Mg(2+). The active-site Proton acceptor is the E182.

It belongs to the PanB family. Homodecamer; pentamer of dimers. The cofactor is Mg(2+).

Its subcellular location is the cytoplasm. The enzyme catalyses 3-methyl-2-oxobutanoate + (6R)-5,10-methylene-5,6,7,8-tetrahydrofolate + H2O = 2-dehydropantoate + (6S)-5,6,7,8-tetrahydrofolate. The protein operates within cofactor biosynthesis; (R)-pantothenate biosynthesis; (R)-pantoate from 3-methyl-2-oxobutanoate: step 1/2. Functionally, catalyzes the reversible reaction in which hydroxymethyl group from 5,10-methylenetetrahydrofolate is transferred onto alpha-ketoisovalerate to form ketopantoate. This is 3-methyl-2-oxobutanoate hydroxymethyltransferase from Campylobacter jejuni (strain RM1221).